We begin with the raw amino-acid sequence, 280 residues long: Merozoite surface protein 2 (280 aa).

Positions 1 to 20 are cleaved as a signal peptide; the sequence is MKVIKTLSIINFFIFVTFNI. N-linked (GlcNAc...) asparagine glycosylation is found at N22 and N36. A polymorphic region region spans residues 44-206; it reads ANEGSNTKSV…PQTAENENPA (163 aa). Residues 47-242 form a disordered region; sequence GSNTKSVGAN…SQKECTDGNK (196 aa). A 5 X 12 AA tandem repeats of P-P-I-T-T-T-E-S-N-S-R-S region spans residues 51–74; that stretch reads KSVGANAPKADTIASGSQSSTNSA. Over residues 64–98 the composition is skewed to low complexity; it reads ASGSQSSTNSASTSTTNNGESQTTTPTAADTPTAT. A compositionally biased stretch (polar residues) spans 99 to 149; that stretch reads ESNSRSPPITTTESNSRSPPITTTESNSRSPPITTTESNSRSPPITTTESN. Repeat copies occupy residues 105 to 116, 117 to 128, 129 to 140, and 141 to 152. Low complexity predominate over residues 150–163; it reads SRSPPITTTESSSS. The stretch at 153–160 is one 5; partial repeat; sequence PPITTTES. N-linked (GlcNAc...) asparagine glycosylation is present at N168. Positions 170 to 182 are enriched in basic and acidic residues; that stretch reads TDGKGEESEKQNE. N-linked (GlcNAc...) asparagine glycosylation is found at N184 and N229. The span at 233-242 shows a compositional bias: basic and acidic residues; that stretch reads SQKECTDGNK. Cysteines 237 and 245 form a disulfide. 2 N-linked (GlcNAc...) asparagine glycosylation sites follow: N253 and N254. N254 is lipidated: GPI-anchor amidated asparagine. The propeptide at 255–280 is removed in mature form; it reads SSNIASINKFVVLISATLVLSFAIFI.

It localises to the cell membrane. Functionally, may play a role in the merozoite attachment to the erythrocyte. In Plasmodium falciparum (isolate K1 / Thailand), this protein is Merozoite surface protein 2.